The sequence spans 434 residues: Asparagine--tRNA ligase (434 aa).

This sequence belongs to the class-II aminoacyl-tRNA synthetase family.

It localises to the cytoplasm. It carries out the reaction tRNA(Asn) + L-asparagine + ATP = L-asparaginyl-tRNA(Asn) + AMP + diphosphate + H(+). This chain is Asparagine--tRNA ligase, found in Pyrococcus horikoshii (strain ATCC 700860 / DSM 12428 / JCM 9974 / NBRC 100139 / OT-3).